We begin with the raw amino-acid sequence, 96 residues long: UPF0213 protein Lreu_0682 (96 aa).

Residues 4–81 enclose the GIY-YIG domain; that stretch reads EKYYIYVLYC…KHQTRRQKEK (78 aa).

This sequence belongs to the UPF0213 family.

The protein is UPF0213 protein Lreu_0682 of Limosilactobacillus reuteri (strain DSM 20016) (Lactobacillus reuteri).